A 610-amino-acid chain; its full sequence is ESX-5 secretion system protein EccA5 (610 aa).

Residue 357 to 364 (GPPGTGKT) participates in ATP binding.

It belongs to the CbxX/CfxQ family. Part of the ESX-5 / type VII secretion system (T7SS), which is composed of cytosolic and membrane components.

It is found in the cytoplasm. In terms of biological role, part of the ESX-5 specialized secretion system, which is responsible for the secretion of EsxN and a number of PE_PGRS and PPE proteins. EccA5 exhibits ATPase activity and may provide energy for the export of ESX-5 substrates. The polypeptide is ESX-5 secretion system protein EccA5 (Mycobacterium marinum (strain ATCC BAA-535 / M)).